We begin with the raw amino-acid sequence, 518 residues long: Motile sperm domain-containing protein 2 (518 aa).

The Cytoplasmic segment spans residues 1-496 (MAENNAQNKA…QLQRSIWFQQ (496 aa)). Residues 85 to 239 (IPRWLLELGG…HMGGTDPFKY (155 aa)) enclose the CRAL-TRIO domain. Residues 252-312 (PLCENGPIAS…KDENEKVDSK (61 aa)) form a disordered region. Basic and acidic residues-rich tracts occupy residues 265–279 (TSSK…KETL) and 300–312 (VSKK…VDSK). Positions 327 to 445 (LLHISPAEEL…MEHRLRCHTV (119 aa)) constitute an MSP domain. A required for FFAT motif binding and phosphorylated FFAT motif binding region spans residues 365–366 (RT). A helical; Anchor for type IV membrane protein membrane pass occupies residues 497–518 (LLLALTMVLLDFVVSFFYSLYN).

In terms of assembly, homooligomer. Interacts (via MSP domain) with STARD3NL (via FFAT motif), RMDN3 (via FFAT motif), OSBPL1A (via FFAT motif) and CERT1 (via FFAT motif). Interacts (via MSP domain) with STARD3 (via phosphorylated FFAT motif); this interaction depends on the critical phosphorylation of STARD3 on 'Ser-209'. Interacts with RB1CC1 (via phosphorylated FFAT motif), MIGA2 (via phosphorylated FFAT motif) and OSBPL1A (via FFAT motif).

Its subcellular location is the endoplasmic reticulum membrane. Endoplasmic reticulum-anchored protein that mediates the formation of contact sites between the endoplasmic (ER) and endosomes, mitochondria or Golgi through interaction with conventional- and phosphorylated-FFAT-containing organelle-bound proteins. In addition, forms endoplasmic reticulum (ER)-lipid droplets (LDs) contacts through a direct protein-membrane interaction and participates in LDs homeostasis. The attachment mechanism involves an amphipathic helix that has an affinity for lipid packing defects present at the surface of LDs. Promotes migration of primary monocytes and neutrophils, in response to various chemokines. This Mus musculus (Mouse) protein is Motile sperm domain-containing protein 2.